We begin with the raw amino-acid sequence, 834 residues long: Copper-exporting P-type ATPase (834 aa).

HMA domains follow at residues 3-64 (QTID…YDAS) and 99-162 (DSQQ…YGAE). Positions 14, 17, 110, and 113 each coordinate Cu(+). The next 6 membrane-spanning stretches (helical) occupy residues 187–207 (WQAI…MIGD), 218–238 (LWLV…GHFY), 254–274 (TLVA…NLWP), 284–304 (LYYE…MLEA), 438–458 (AVFV…WYFF), and 464–484 (IVYT…CALG). D523 (4-aspartylphosphate intermediate) is an active-site residue. Mg(2+) contacts are provided by D720 and D724. The next 2 helical transmembrane spans lie at 779-799 (LGAF…LWPF) and 801-821 (GTLL…ITVV).

This sequence belongs to the cation transport ATPase (P-type) (TC 3.A.3) family. Type IB subfamily.

The protein resides in the cell inner membrane. Its subcellular location is the cytoplasm. The catalysed reaction is Cu(+)(in) + ATP + H2O = Cu(+)(out) + ADP + phosphate + H(+). Involved in Cu(+) export. Its function is as follows. Probably also encodes a cytoplasmic copper chaperone CopA(Z) that is produced by programmed ribosomal frameshifting. The sequence is that of Copper-exporting P-type ATPase (copA) from Escherichia coli O157:H7.